We begin with the raw amino-acid sequence, 549 residues long: Glucose-6-phosphate isomerase (549 aa).

The active-site Proton donor is the Glu355. Catalysis depends on residues His386 and Lys514.

This sequence belongs to the GPI family.

The protein localises to the cytoplasm. It carries out the reaction alpha-D-glucose 6-phosphate = beta-D-fructose 6-phosphate. The protein operates within carbohydrate biosynthesis; gluconeogenesis. Its pathway is carbohydrate degradation; glycolysis; D-glyceraldehyde 3-phosphate and glycerone phosphate from D-glucose: step 2/4. Functionally, catalyzes the reversible isomerization of glucose-6-phosphate to fructose-6-phosphate. This Aeromonas salmonicida (strain A449) protein is Glucose-6-phosphate isomerase.